We begin with the raw amino-acid sequence, 148 residues long: UPF0178 protein lpp0103 (148 aa).

It belongs to the UPF0178 family.

This chain is UPF0178 protein lpp0103, found in Legionella pneumophila (strain Paris).